The sequence spans 487 residues: N-succinylglutamate 5-semialdehyde dehydrogenase (487 aa).

221–226 (GSSDTG) is a binding site for NAD(+). Active-site residues include E244 and C278.

This sequence belongs to the aldehyde dehydrogenase family. AstD subfamily.

It catalyses the reaction N-succinyl-L-glutamate 5-semialdehyde + NAD(+) + H2O = N-succinyl-L-glutamate + NADH + 2 H(+). Its pathway is amino-acid degradation; L-arginine degradation via AST pathway; L-glutamate and succinate from L-arginine: step 4/5. Catalyzes the NAD-dependent reduction of succinylglutamate semialdehyde into succinylglutamate. In Burkholderia cenocepacia (strain HI2424), this protein is N-succinylglutamate 5-semialdehyde dehydrogenase.